The primary structure comprises 545 residues: MAAKDIRFGEDARARMVRGVNVLANAVKATLGPKGRNVVLEKSFGAPTITKDGVSVAKEIELADKFENMGAQMVKEVASKTSDNAGDGTTTATVLAQALIREGMKAVAAGMNPMDLKRGIDKAVTSAVEELKKISKPCSTSKEIAQVGSISANSDTDIGELIAKAMDKVGKEGVITVEEGSGLENELDVVEGMQFDRGYLSPYFINNPQSMQAELEDPFILLHDKKISNVRDLLPILEGVAKAGKPLLIVAEDVEGEALATLVVNTIRGIVKVCAVKAPGFGDRRKAMLEDMAILTGGTVISEEVGLSLEKATINDLGRAKKVQVSKENTTIIDGAGDTADIEARIKQIKAQIEETTSDYDREKLQERVAKLAGGVAVIKVGAATEVEMKEKKARVEDALHATRAAVEEGIVPGGGVALIRAKAAIAELKGANEDQNHGIAIALRAMEAPLREIVTNAGDEPSVVLNRVAEGTGAFGYNAANGEFGDMIEFGILDPTKVTRSALQNAASIAGLMITTEAMVAEAPKKEEPAAPGGGMGGMGGMDF.

ATP contacts are provided by residues 30–33 (TLGP), K51, 87–91 (DGTTT), G415, 479–481 (NAA), and D495.

This sequence belongs to the chaperonin (HSP60) family. As to quaternary structure, forms a cylinder of 14 subunits composed of two heptameric rings stacked back-to-back. Interacts with the co-chaperonin GroES.

Its subcellular location is the cytoplasm. The catalysed reaction is ATP + H2O + a folded polypeptide = ADP + phosphate + an unfolded polypeptide.. In terms of biological role, together with its co-chaperonin GroES, plays an essential role in assisting protein folding. The GroEL-GroES system forms a nano-cage that allows encapsulation of the non-native substrate proteins and provides a physical environment optimized to promote and accelerate protein folding. In Escherichia coli O1:K1 / APEC, this protein is Chaperonin GroEL 2.